Here is a 482-residue protein sequence, read N- to C-terminus: FAD-dependent monooxygenase esdpE (482 aa).

An N-terminal signal peptide occupies residues 1 to 21; it reads MGAERLKVIIVGGSIAGLTLA. FAD contacts are provided by glutamate 35 and arginine 108. The N-linked (GlcNAc...) asparagine glycan is linked to asparagine 243. FAD contacts are provided by aspartate 308 and alanine 321. The chain crosses the membrane as a helical span at residues 440 to 460; sequence LFSGSLLLIMSVALLFGVICW.

This sequence belongs to the paxM FAD-dependent monooxygenase family. Requires FAD as cofactor.

It localises to the membrane. The protein operates within secondary metabolite biosynthesis; terpenoid biosynthesis. FAD-dependent monooxygenase; part of the cluster that mediates the biosynthesis of shearones, diterpenoid pyrones (DPs) which are structurally diverse meroterpenoids consisting of a diterpene linked by a pyrone, and which may exhibit a range of bioactivities. Within the pathway, esdpE takes part to the biosynthesis of the molecular scaffold by catalyzing the formation of an (S)-epoxide ring at the terminal olefin of the geranylgeranyl group. The molecular scaffold is commonly biosynthesized by a series of enzymes including the non-reducing polyketide synthase (NR-PKS) esdpA that generates an alpha-pyrone; the prenyltransferase esdpC that attaches a geranylgeranyl pyrophosphate (GGPP) produced by the GGPP synthase (GGPPS) esdpD onto the pyrone unit; the FAD-dependent monooxygenase esdpE that converts an olefin on the diterpene unit into an epoxide; and the terpene cyclase esdpB that catalyzes the cyclization reactions to give the molecular backbone shearone A. In the modification steps, esdpF oxidizes the hydroxy group to a ketone at C-3 and esdpG then attaches hydroxy groups at both C-11 and C-12. After that, esdpI hydroxylates at C-20 and esdpH hydroxylates at C-6'. The ether bridge is generated by nucleophilic attack of the hydroxy group at C-20 to the carbonyl carbon at C-3. EsdpH can also functions prior to esdpI. The different combinations of these modification enzymes lead to the production of diverse shearone derivatives, shearone I being the end product of the pathway. The alpha-ketoglutarate-dependent dioxygenase esdpJ seems not to be involved in this pathway. The chain is FAD-dependent monooxygenase esdpE from Penicillium shearii (Eupenicillium shearii).